Reading from the N-terminus, the 1314-residue chain is Phosphoribosylformylglycinamidine synthase (1314 aa).

Residues 307–318 and Ala-674 each bind ATP; that span reads GAATGAGGEIRD. Residues Asp-675, Glu-714, Asn-718, and Asp-880 each coordinate Mg(2+). Residue Ser-882 participates in ATP binding. A Glutamine amidotransferase type-1 domain is found at 1063 to 1314; sequence IAILREQGVN…LFAGARKALG (252 aa). Cys-1156 functions as the Nucleophile in the catalytic mechanism. Active-site residues include His-1279 and Glu-1281.

It in the N-terminal section; belongs to the FGAMS family. Monomer.

It localises to the cytoplasm. The enzyme catalyses N(2)-formyl-N(1)-(5-phospho-beta-D-ribosyl)glycinamide + L-glutamine + ATP + H2O = 2-formamido-N(1)-(5-O-phospho-beta-D-ribosyl)acetamidine + L-glutamate + ADP + phosphate + H(+). The protein operates within purine metabolism; IMP biosynthesis via de novo pathway; 5-amino-1-(5-phospho-D-ribosyl)imidazole from N(2)-formyl-N(1)-(5-phospho-D-ribosyl)glycinamide: step 1/2. In terms of biological role, phosphoribosylformylglycinamidine synthase involved in the purines biosynthetic pathway. Catalyzes the ATP-dependent conversion of formylglycinamide ribonucleotide (FGAR) and glutamine to yield formylglycinamidine ribonucleotide (FGAM) and glutamate. This Neisseria gonorrhoeae (strain ATCC 700825 / FA 1090) protein is Phosphoribosylformylglycinamidine synthase.